Consider the following 113-residue polypeptide: Ig kappa chain V-II region 26-10 (113 aa).

The framework-1 stretch occupies residues 1-23 (DVVMTQTPLSLPVSLGDQASISC). A disulfide bridge links Cys-23 with Cys-93. Residues 24–39 (RSSQSLVHSNGNTYLN) form a complementarity-determining-1 region. The interval 40 to 54 (WYLQKAGQSPKLLIY) is framework-2. The interval 55–61 (KVSNRFS) is complementarity-determining-2. The framework-3 stretch occupies residues 62–93 (GVPDRFSGSGSGTDFTLKISRVEAEDLGIYFC). The segment at 94-102 (SQTTHVPPT) is complementarity-determining-3. The segment at 103–112 (FGGGTKLEIK) is framework-4.

This is Ig kappa chain V-II region 26-10 from Mus musculus (Mouse).